Consider the following 593-residue polypeptide: Aspartate--tRNA ligase (593 aa).

Glu-173 lines the L-aspartate pocket. The interval 197–200 is aspartate; it reads QLFK. Arg-219 contacts L-aspartate. Residues 219 to 221 and Gln-228 each bind ATP; that span reads RDE. His-449 lines the L-aspartate pocket. An ATP-binding site is contributed by Glu-483. Arg-490 serves as a coordination point for L-aspartate. 535 to 538 serves as a coordination point for ATP; the sequence is GLDR.

Belongs to the class-II aminoacyl-tRNA synthetase family. Type 1 subfamily. As to quaternary structure, homodimer.

Its subcellular location is the cytoplasm. The enzyme catalyses tRNA(Asp) + L-aspartate + ATP = L-aspartyl-tRNA(Asp) + AMP + diphosphate. Functionally, catalyzes the attachment of L-aspartate to tRNA(Asp) in a two-step reaction: L-aspartate is first activated by ATP to form Asp-AMP and then transferred to the acceptor end of tRNA(Asp). This Shewanella piezotolerans (strain WP3 / JCM 13877) protein is Aspartate--tRNA ligase.